The primary structure comprises 345 residues: NADH-ubiquinone oxidoreductase chain 2 (345 aa).

Helical transmembrane passes span 3-23 (PYILSIMLISLGLGTTLTFAS), 25-45 (NWLLAWMGLEINTLAIIPLMA), 59-79 (YFITQAAAAALLLFSSLINAW), 95-115 (ALMTIAIAIKLGVAPVHFWLP), 148-168 (LMPELMIALGLMSTIVGGWGG), 177-196 (IMAYSSIAHLGWIISIMHFM), 201-223 (IINLIMYIIMTTTMFMIFNTLNS), 236-256 (FPALSAITMLALLSLGGLPPL), 273-293 (NLALTATVMALSALLSLYFYL), and 322-342 (FILPTMMIMTIAMLPISPSII).

This sequence belongs to the complex I subunit 2 family.

The protein resides in the mitochondrion inner membrane. It catalyses the reaction a ubiquinone + NADH + 5 H(+)(in) = a ubiquinol + NAD(+) + 4 H(+)(out). In terms of biological role, core subunit of the mitochondrial membrane respiratory chain NADH dehydrogenase (Complex I) that is believed to belong to the minimal assembly required for catalysis. Complex I functions in the transfer of electrons from NADH to the respiratory chain. The immediate electron acceptor for the enzyme is believed to be ubiquinone. In Polypterus ornatipinnis (Ornate bichir), this protein is NADH-ubiquinone oxidoreductase chain 2 (MT-ND2).